The primary structure comprises 191 residues: Elongation factor P 1 (191 aa).

The protein belongs to the elongation factor P family.

It localises to the cytoplasm. The protein operates within protein biosynthesis; polypeptide chain elongation. Functionally, involved in peptide bond synthesis. Stimulates efficient translation and peptide-bond synthesis on native or reconstituted 70S ribosomes in vitro. Probably functions indirectly by altering the affinity of the ribosome for aminoacyl-tRNA, thus increasing their reactivity as acceptors for peptidyl transferase. The protein is Elongation factor P 1 of Lactobacillus acidophilus (strain ATCC 700396 / NCK56 / N2 / NCFM).